The primary structure comprises 355 residues: Holliday junction branch migration complex subunit RuvB (355 aa).

The tract at residues 1–193 (MGRFSEDSAD…FGFTAHMDFY (193 aa)) is large ATPase domain (RuvB-L). Residues leucine 32, arginine 33, glycine 74, lysine 77, threonine 78, serine 79, 140–142 (EDF), arginine 183, tyrosine 193, and arginine 230 contribute to the ATP site. Threonine 78 is a binding site for Mg(2+). The interval 194–264 (EPSELERVLA…IAKYALEVYD (71 aa)) is small ATPAse domain (RuvB-S). Residues 267-355 (ELGLDRLDRA…VGLGQTGLFD (89 aa)) form a head domain (RuvB-H) region. Residues arginine 322 and arginine 327 each coordinate DNA.

Belongs to the RuvB family. Homohexamer. Forms an RuvA(8)-RuvB(12)-Holliday junction (HJ) complex. HJ DNA is sandwiched between 2 RuvA tetramers; dsDNA enters through RuvA and exits via RuvB. An RuvB hexamer assembles on each DNA strand where it exits the tetramer. Each RuvB hexamer is contacted by two RuvA subunits (via domain III) on 2 adjacent RuvB subunits; this complex drives branch migration. In the full resolvosome a probable DNA-RuvA(4)-RuvB(12)-RuvC(2) complex forms which resolves the HJ.

It localises to the cytoplasm. It catalyses the reaction ATP + H2O = ADP + phosphate + H(+). Its function is as follows. The RuvA-RuvB-RuvC complex processes Holliday junction (HJ) DNA during genetic recombination and DNA repair, while the RuvA-RuvB complex plays an important role in the rescue of blocked DNA replication forks via replication fork reversal (RFR). RuvA specifically binds to HJ cruciform DNA, conferring on it an open structure. The RuvB hexamer acts as an ATP-dependent pump, pulling dsDNA into and through the RuvAB complex. RuvB forms 2 homohexamers on either side of HJ DNA bound by 1 or 2 RuvA tetramers; 4 subunits per hexamer contact DNA at a time. Coordinated motions by a converter formed by DNA-disengaged RuvB subunits stimulates ATP hydrolysis and nucleotide exchange. Immobilization of the converter enables RuvB to convert the ATP-contained energy into a lever motion, pulling 2 nucleotides of DNA out of the RuvA tetramer per ATP hydrolyzed, thus driving DNA branch migration. The RuvB motors rotate together with the DNA substrate, which together with the progressing nucleotide cycle form the mechanistic basis for DNA recombination by continuous HJ branch migration. Branch migration allows RuvC to scan DNA until it finds its consensus sequence, where it cleaves and resolves cruciform DNA. The chain is Holliday junction branch migration complex subunit RuvB from Mycolicibacterium vanbaalenii (strain DSM 7251 / JCM 13017 / BCRC 16820 / KCTC 9966 / NRRL B-24157 / PYR-1) (Mycobacterium vanbaalenii).